The chain runs to 60 residues: Light-harvesting protein B-800/850 alpha chain (60 aa).

Over Met-1 to Thr-14 the chain is Cytoplasmic. Residues Gly-15–Leu-35 traverse the membrane as a helical segment. His-31 contributes to the a bacteriochlorophyll binding site. Residues Thr-36–Gln-60 are Periplasmic-facing.

Belongs to the antenna complex alpha subunit family. The core complex is formed by different alpha and beta chains, binding bacteriochlorophyll molecules, and arranged most probably in tetrameric structures disposed around the reaction center. The non-pigmented gamma chains may constitute additional components.

The protein localises to the cell inner membrane. Functionally, antenna complexes are light-harvesting systems, which transfer the excitation energy to the reaction centers. This Rhodobacter capsulatus (Rhodopseudomonas capsulata) protein is Light-harvesting protein B-800/850 alpha chain (pucA).